A 199-amino-acid chain; its full sequence is Transgelin-3 (199 aa).

In terms of domain architecture, Calponin-homology (CH) spans 24 to 136; the sequence is ADLENKLVDW…RTLMALGSVA (113 aa). Residue Ser-163 is modified to Phosphoserine. One copy of the Calponin-like repeat lies at 174–199; the sequence is IGLQMGSNKGASQAGMTGYGMPRQIM. Positions 178-188 are enriched in polar residues; sequence MGSNKGASQAG. The interval 178-199 is disordered; that stretch reads MGSNKGASQAGMTGYGMPRQIM.

The protein belongs to the calponin family.

The sequence is that of Transgelin-3 (TAGLN3) from Bos taurus (Bovine).